Consider the following 50-residue polypeptide: Protease inhibitor 2 (50 aa).

The region spanning 2–50 (EDCVGRKACTREWYPVCGSDGVTYSNPCNFSAQQEQCDPNITIAHMGEC) is the Kazal-like domain. Disulfide bonds link cysteine 10–cysteine 29 and cysteine 18–cysteine 50. Residues asparagine 30 and asparagine 41 are each glycosylated (N-linked (GlcNAc...) asparagine).

Functionally, serine protease inhibitor. Strongly inhibits human neutrophil elastase and trypsin, also inhibits porcine pancreatic elastase and subtilisin A. Does not inhibit chymotrypsin, plasma kallikrein, pancreatic kallikrein, thrombin or papain. In Cenchritis muricatus (Beaded periwinkle), this protein is Protease inhibitor 2.